Consider the following 60-residue polypeptide: UPF0181 protein ESA_01442 (60 aa).

This sequence belongs to the UPF0181 family.

The sequence is that of UPF0181 protein ESA_01442 from Cronobacter sakazakii (strain ATCC BAA-894) (Enterobacter sakazakii).